The sequence spans 262 residues: MIRASDISVRLAGRQVLHGISLDAAPGAMTAIVGPNGSGKTTTLKAISGELTPSAGKVTINGRDIASLKPWELALKRGVLPQSTVISFPFTVREIVRLGLMANGGEASAHGRIADQALEAVDLAGFSGRFYQELSGGEQQRVQLARVLCQISAPVAAGEPRYLLLDEPVSSLDIRHQLTIMRLARQFCADGGGVVAVMHDLNLTSMFADQIVMMKAGRIRARGAPKDVLTDETMEAVFGCRMRVSVAPAHDIPFVLPQSATM.

In terms of domain architecture, ABC transporter spans 2 to 241 (IRASDISVRL…ETMEAVFGCR (240 aa)). Residue 34–41 (GPNGSGKT) participates in ATP binding.

The protein belongs to the ABC transporter superfamily. Heme (hemin) importer (TC 3.A.1.14.5) family. As to quaternary structure, the complex is composed of two ATP-binding proteins (HmuV), two transmembrane proteins (HmuU) and a solute-binding protein (HmuT).

Its subcellular location is the cell inner membrane. Part of the ABC transporter complex HmuTUV involved in hemin import. Responsible for energy coupling to the transport system. The protein is Hemin import ATP-binding protein HmuV of Rhizobium meliloti (strain 1021) (Ensifer meliloti).